The sequence spans 211 residues: Ras-related protein RABB1b (211 aa).

13–20 (GDTGVGKS) serves as a coordination point for GTP. Positions 35–43 (HDLTIGVEF) match the Effector region motif. GTP contacts are provided by residues 61–65 (DTAGQ), 119–122 (NKCD), and 149–150 (SA). Residues C209 and C210 are each lipidated (S-geranylgeranyl cysteine).

This sequence belongs to the small GTPase superfamily. Rab family.

It is found in the cell membrane. Functionally, intracellular vesicle trafficking and protein transport. The sequence is that of Ras-related protein RABB1b (RABB1B) from Arabidopsis thaliana (Mouse-ear cress).